Here is a 275-residue protein sequence, read N- to C-terminus: Two-component response regulator PprB (275 aa).

Residues 10 to 128 (SVLIIDDEPQ…ELLHGLERLE (119 aa)) enclose the Response regulatory domain. 4-aspartylphosphate is present on Asp60. The tract at residues 173–205 (SQPSALRSEDSQPSAPPAPVAESQVSPSNPLFG) is disordered. An HTH luxR-type domain is found at 200–265 (SNPLFGKLSP…QLALALSPAA (66 aa)). The H-T-H motif DNA-binding region spans 224 to 243 (NYQIAYELGITENTVKLYVS).

In terms of processing, phosphorylated by PprA.

Its function is as follows. Member of the two-component regulatory system PprA/PprB involved in biofilm formation by controlling the expression of many related genes including type IVb pili major subunit flp pilin, adhesin bapA or cupE fimbriae. Functions as a transcription regulator by direct binding to promoter regions. Negatively regulates its own transcription. This chain is Two-component response regulator PprB, found in Pseudomonas aeruginosa (strain ATCC 15692 / DSM 22644 / CIP 104116 / JCM 14847 / LMG 12228 / 1C / PRS 101 / PAO1).